The primary structure comprises 239 residues: Uridylate kinase (239 aa).

12 to 15 (KLSG) serves as a coordination point for ATP. Residues 20–25 (GDQGYG) form an involved in allosteric activation by GTP region. Glycine 54 provides a ligand contact to UMP. 2 residues coordinate ATP: glycine 55 and arginine 59. Residues aspartate 74 and 135 to 142 (TGNPYFTT) each bind UMP. ATP-binding residues include threonine 162, tyrosine 168, and aspartate 171.

This sequence belongs to the UMP kinase family. As to quaternary structure, homohexamer.

It is found in the cytoplasm. The enzyme catalyses UMP + ATP = UDP + ADP. Its pathway is pyrimidine metabolism; CTP biosynthesis via de novo pathway; UDP from UMP (UMPK route): step 1/1. Allosterically activated by GTP. Inhibited by UTP. In terms of biological role, catalyzes the reversible phosphorylation of UMP to UDP. This is Uridylate kinase from Geobacter metallireducens (strain ATCC 53774 / DSM 7210 / GS-15).